Reading from the N-terminus, the 84-residue chain is Defensin-like protein 199 (84 aa).

An N-terminal signal peptide occupies residues methionine 1–serine 24. 4 disulfide bridges follow: cysteine 40–cysteine 80, cysteine 47–cysteine 72, cysteine 56–cysteine 78, and cysteine 60–cysteine 79.

Belongs to the DEFL family.

The protein localises to the secreted. This is Defensin-like protein 199 from Arabidopsis thaliana (Mouse-ear cress).